Reading from the N-terminus, the 466-residue chain is Integrin-linked protein kinase homolog pat-4 (466 aa).

ANK repeat units follow at residues 50–79, 83–112, and 116–145; these read HAFS…RVNS, GDDT…DVNA, and HGMT…AVNV. The 256-residue stretch at 210-465 folds into the Protein kinase domain; the sequence is LNLITKIAES…QIIPILERMI (256 aa).

Belongs to the protein kinase superfamily. TKL Ser/Thr protein kinase family. In terms of assembly, interacts (via protein kinase domain) with unc-112 (via N-terminus). Interacts (via ANK repeats) with unc-97 (via first LIM domain). Interacts (via protein kinase domain) with pat-6 (via C-terminus CH domain). May form a complex with unc-112, unc-97 and pat-6. Does not interact with integrin pat-3. Component of an integrin containing attachment complex, composed of at least pat-2, pat-3, pat-4, pat-6, unc-52, unc-97 and unc-112. In terms of tissue distribution, expressed in body wall muscle.

The protein localises to the cytoplasm. Its subcellular location is the myofibril. The protein resides in the sarcomere. It localises to the m line. It is found in the basal cell membrane. Probable pseudokinase that acts as an adapter protein. Component of an integrin containing attachment complex, which is required for muscle development and maintenance. Involved in the assembly of dense bodies and M lines during body wall muscle development by recruiting several of their components including integrin pat-3, cpna-1, unc-89 and unc-112 to integrin-mediated attachment sites. Plays a role in distal tip cell (DTC) migration and in oocyte development probably by regulating the actin cytoskeleton. During the formation of neuromuscular junctions at the larval stage, negatively regulates membrane protrusion from body wall muscles. May be involved in thermotolerance and lifespan. The protein is Integrin-linked protein kinase homolog pat-4 of Caenorhabditis elegans.